The chain runs to 215 residues: Ras-related protein SEC4 (215 aa).

27 to 34 (GDSGVGKS) is a GTP binding site. An Effector region motif is present at residues 49 to 57 (FITTIGIDF). GTP is bound by residues 75-79 (DTAGQ) and 133-136 (NKSD). 2 positions are modified to phosphoserine: Ser-201 and Ser-204. 2 S-geranylgeranyl cysteine lipidation sites follow: Cys-214 and Cys-215.

It belongs to the small GTPase superfamily. Rab family. As to quaternary structure, interacts with the guanyl-nucleotide exchange factor SEC2. Interacts with SRO7, YIF1, YIP3, YIP4 and YIP5.

The protein resides in the cytoplasmic vesicle. It localises to the secretory vesicle membrane. The protein localises to the cell membrane. It is found in the cytoplasm. Its function is as follows. Involved in exocytosis. Maybe by regulating the binding and fusion of secretory vesicles with the cell surface. The GTP-bound form of SEC4 may interact with an effector, thereby stimulating its activity and leading to exocytotic fusion. SEC4 may be an upstream activator of the 19.5S SEC8/SEC15 particle. SEC4 probably interacts directly with SEC8; it could serve as the attachment site for the SEC8/SEC15 particle. This chain is Ras-related protein SEC4 (SEC4), found in Saccharomyces cerevisiae (strain ATCC 204508 / S288c) (Baker's yeast).